The chain runs to 273 residues: Beta-lactamase OXA-23 (273 aa).

Positions 1–17 are cleaved as a signal peptide; the sequence is MNKYFTCYVVASLFLSG. The active-site Acyl-ester intermediate is the S79. Residues S79, K82, S126, T217, W219, and R259 each coordinate a beta-lactam. K82 is subject to N6-carboxylysine.

This sequence belongs to the class-D beta-lactamase family. In terms of assembly, monomer. Carboxylated on the epsilon-amino group of a lysine, with the resulting carbamate functional group serving as a general base. Probably N-carboxylated at Lys-82 at neutral pH in vivo and undergoes complete N-decarboxylation, at pH 4.1, in vitro.

It is found in the periplasm. It carries out the reaction a beta-lactam + H2O = a substituted beta-amino acid. Inhibited by the desmethyl carbapenem, MA-1-206, via a covalent binding to Ser-79. Its function is as follows. Class D beta-lactamase which confers resistance to the beta-lactam antibiotics, including ampicillin, and carbapenems such as imipenem and meropenem. Acts via hydrolysis of the beta-lactam ring. Has penicillin-, cephalosporin- and carbapenem-hydrolyzing activities, but lacks ceftazidime-hydrolyzing activity. The sequence is that of Beta-lactamase OXA-23 from Acinetobacter baumannii.